Reading from the N-terminus, the 1068-residue chain is Rho family-interacting cell polarization regulator 2 (1068 aa).

Ser21 and Ser37 each carry phosphoserine; in isoform. The segment at 45-73 is disordered; the sequence is LKKPQAKLKKMHNLGHKNNNPPKEPQPKR. Over residues 48 to 59 the composition is skewed to basic residues; that stretch reads PQAKLKKMHNLG. The interval 55–113 is involved in cell filopodia formation; that stretch reads MHNLGHKNNNPPKEPQPKRVEEVYRALKNGLDEYLEVHQTELDKLTAQLKDMKRNSRLG. Residues 83-112 adopt a coiled-coil conformation; sequence NGLDEYLEVHQTELDKLTAQLKDMKRNSRL. Ser341 bears the Phosphoserine; in isoform 2 mark. Over residues 474–491 the composition is skewed to polar residues; it reads QNEGMDDTSSASSRNSLG. Residues 474–524 form a disordered region; it reads QNEGMDDTSSASSRNSLGEGQEPKSHLKEEDPEEPRKPASAPSEACRRQSS. Residues 494–510 are compositionally biased toward basic and acidic residues; that stretch reads QEPKSHLKEEDPEEPRK. Position 523 is a phosphoserine; in isoform 2 (Ser523). Position 573 is a phosphoserine (Ser573). Ser585 carries the phosphoserine; in isoform 2 modification. Residues 768–793 adopt a coiled-coil conformation; that stretch reads VARSLLEKLSRQIQVMEKLAAVSDEN.

The protein belongs to the RIPOR family. As to quaternary structure, homooligomer; homooligomerization is regulated by RHOC and leads to the formation of concatemers through the association of N- and C-termini. Interacts with 14-3-3 proteins; these interactions occur during myogenic cell differentiation. Interacts with HDAC6; this interaction occurs during early myogenic differentiation and prevents HDAC6 to deacetylate tubulin. Interacts with DYSF; this interaction occurs during early myogenic differentiation. Interacts with MYOF. Interacts with RHOC. Isoform 1 and isoform 2 interact (via active GTP- or inactive GDP-bound forms) with RHOA; these interactions are direct, block the loading of GTP to RHOA and decrease upon chemokine CCL19 stimulation in primary T lymphocytes. Isoform 2 interacts (phosphorylated form) with HDAC6; this interaction induces T cell proliferation arrest. Isoform 2 interacts (phosphorylated form) with 14-3-3 proteins; these interactions induces T cell proliferation arrest. Isoform 2 interacts with 14-3-3 proteins. Isoform 2 interacts (via phosphorylated form) with YWHAB; this interaction occurs in a chemokine-dependent manner and does not compete for binding of RIPOR2 with RHOA nor blocks inhibition of RIPOR2-mediated RHOA activity. Isoform 2 interacts with YWHAE. Isoform 2 interacts with YWHAQ. Phosphorylated. Isoform 2 is phosphorylated in T cells. Chemokine-induced phosphorylation of isoform 2 in neutrophils occurs in a PKC- and AKT-dependent manner, resulting in RIPOR2 interaction with YWHAB and stabilization. Isoform 2 is phosphorylated by PKCA, AKT1 and MAPKAPK1A; in vitro. In terms of processing, acetylated during myogenic differentiation. In terms of tissue distribution, expressed in primary fetal mononuclear myoblast. Expressed strongly in naive T lymphocytes. Expressed weakly in activated T lymphocytes (at protein level). Expressed in blood cells and adult tissues of hematopoietic origin, such as the secondary lymphoid organs. Expressed in cytotrophoblast.

The protein resides in the cytoplasm. It localises to the cytoskeleton. It is found in the cell projection. The protein localises to the filopodium. Its subcellular location is the stereocilium. The protein resides in the stereocilium membrane. It localises to the apical cell membrane. In terms of biological role, acts as an inhibitor of the small GTPase RHOA and plays several roles in the regulation of myoblast and hair cell differentiation, lymphocyte T proliferation and neutrophil polarization. Inhibits chemokine-induced T lymphocyte responses, such as cell adhesion, polarization and migration. Involved also in the regulation of neutrophil polarization, chemotaxis and adhesion. Required for normal development of inner and outer hair cell stereocilia within the cochlea of the inner ear. Plays a role for maintaining the structural organization of the basal domain of stereocilia. Involved in mechanosensory hair cell function. Required for normal hearing. Acts as an inhibitor of the small GTPase RHOA. Plays a role in fetal mononuclear myoblast differentiation by promoting filopodia and myotube formation. Maintains naive T lymphocytes in a quiescent state. This chain is Rho family-interacting cell polarization regulator 2 (RIPOR2), found in Homo sapiens (Human).